The chain runs to 37 residues: Diuretic hormone 1 (37 aa).

The protein belongs to the sauvagine/corticotropin-releasing factor/urotensin I family.

Its subcellular location is the secreted. In terms of biological role, stimulates fluid secretion by the Malpighian tubules. Increases cyclic AMP production. The protein is Diuretic hormone 1 of Tenebrio molitor (Yellow mealworm beetle).